The sequence spans 386 residues: NADPH-dependent alkenal/one oxidoreductase, chloroplastic (386 aa).

Belongs to the zinc-containing alcohol dehydrogenase family. Quinone oxidoreductase subfamily.

It localises to the plastid. The protein localises to the chloroplast. Functionally, reduces the double bond in short-chain unsaturated carbonyls. Acts preferentially on alpha,beta-unsaturated ketones rather on alpha,beta-unsaturated aldehydes. Has no activity with (E)-2-hexenal and (E)-2-pentenal. Contributes to detoxify stromal reactive carbonyls produced under oxidative stress. The polypeptide is NADPH-dependent alkenal/one oxidoreductase, chloroplastic (Arabidopsis thaliana (Mouse-ear cress)).